A 602-amino-acid chain; its full sequence is Prostaglandin G/H synthase 1 (602 aa).

An N-terminal signal peptide occupies residues 1 to 26 (MSRRSLSLWFPLLLLLLLPPTPSVLL). An EGF-like domain is found at 34 to 72 (PVNPCCYYPCQNQGVCVRFGLDNYQCDCTRTGYSGPNCT). Cystine bridges form between cysteine 38-cysteine 49, cysteine 39-cysteine 161, cysteine 43-cysteine 59, and cysteine 61-cysteine 71. Residues asparagine 70, asparagine 106, and asparagine 146 are each glycosylated (N-linked (GlcNAc...) asparagine). Residue histidine 209 is the Proton acceptor of the active site. Tyrosine 387 functions as the For cyclooxygenase activity in the catalytic mechanism. Residue histidine 390 participates in heme b binding. An intrachain disulfide couples cysteine 571 to cysteine 577.

The protein belongs to the prostaglandin G/H synthase family. In terms of assembly, homodimer. Requires heme b as cofactor.

The protein resides in the microsome membrane. Its subcellular location is the endoplasmic reticulum membrane. The enzyme catalyses (5Z,8Z,11Z,14Z)-eicosatetraenoate + AH2 + 2 O2 = prostaglandin H2 + A + H2O. It catalyses the reaction (5Z,8Z,11Z,14Z)-eicosatetraenoate + 2 O2 = prostaglandin G2. The catalysed reaction is prostaglandin G2 + AH2 = prostaglandin H2 + A + H2O. It carries out the reaction (9Z,12Z)-octadecadienoate + AH2 + O2 = (9R)-hydroxy-(10E,12Z)-octadecadienoate + A + H2O. The enzyme catalyses (9Z,12Z)-octadecadienoate + AH2 + O2 = (9S)-hydroxy-(10E,12Z)-octadecadienoate + A + H2O. It catalyses the reaction (9Z,12Z)-octadecadienoate + AH2 + O2 = (13S)-hydroxy-(9Z,11E)-octadecadienoate + A + H2O. The catalysed reaction is (9Z,12Z)-octadecadienoate + AH2 + O2 = (13R)-hydroxy-(9Z,11E)-octadecadienoate + A + H2O. It functions in the pathway lipid metabolism; prostaglandin biosynthesis. Its activity is regulated as follows. The cyclooxygenase activity is inhibited by nonsteroidal anti-inflammatory drugs (NSAIDs) including ibuprofen, flurbiprofen, ketoprofen, naproxen, flurbiprofen, anirolac, fenclofenac and diclofenac. In terms of biological role, dual cyclooxygenase and peroxidase that plays an important role in the biosynthesis pathway of prostanoids, a class of C20 oxylipins mainly derived from arachidonate ((5Z,8Z,11Z,14Z)-eicosatetraenoate, AA, C20:4(n-6)), with a particular role in the inflammatory response. The cyclooxygenase activity oxygenates AA to the hydroperoxy endoperoxide prostaglandin G2 (PGG2), and the peroxidase activity reduces PGG2 to the hydroxy endoperoxide prostaglandin H2 (PGH2), the precursor of all 2-series prostaglandins and thromboxanes. This complex transformation is initiated by abstraction of hydrogen at carbon 13 (with S-stereochemistry), followed by insertion of molecular O2 to form the endoperoxide bridge between carbon 9 and 11 that defines prostaglandins. The insertion of a second molecule of O2 (bis-oxygenase activity) yields a hydroperoxy group in PGG2 that is then reduced to PGH2 by two electrons. Involved in the constitutive production of prostanoids in particular in the stomach and platelets. In gastric epithelial cells, it is a key step in the generation of prostaglandins, such as prostaglandin E2 (PGE2), which plays an important role in cytoprotection. In platelets, it is involved in the generation of thromboxane A2 (TXA2), which promotes platelet activation and aggregation, vasoconstriction and proliferation of vascular smooth muscle cells. Can also use linoleate (LA, (9Z,12Z)-octadecadienoate, C18:2(n-6)) as substrate and produce hydroxyoctadecadienoates (HODEs) in a regio- and stereospecific manner, being (9R)-HODE ((9R)-hydroxy-(10E,12Z)-octadecadienoate) and (13S)-HODE ((13S)-hydroxy-(9Z,11E)-octadecadienoate) its major products. The protein is Prostaglandin G/H synthase 1 of Mus musculus (Mouse).